Reading from the N-terminus, the 143-residue chain is Large ribosomal subunit protein uL11 (143 aa).

This sequence belongs to the universal ribosomal protein uL11 family. In terms of assembly, part of the ribosomal stalk of the 50S ribosomal subunit. Interacts with L10 and the large rRNA to form the base of the stalk. L10 forms an elongated spine to which L12 dimers bind in a sequential fashion forming a multimeric L10(L12)X complex. Post-translationally, one or more lysine residues are methylated.

In terms of biological role, forms part of the ribosomal stalk which helps the ribosome interact with GTP-bound translation factors. In Thiobacillus denitrificans (strain ATCC 25259 / T1), this protein is Large ribosomal subunit protein uL11.